Here is a 353-residue protein sequence, read N- to C-terminus: Photosystem II protein D1 (353 aa).

Thr2 carries the N-acetylthreonine modification. Thr2 is subject to Phosphothreonine. Helical transmembrane passes span 29–46 (YIGW…TATS), 118–133 (HFLL…EWEL), and 142–156 (WIAV…AAAA). His118 is a chlorophyll a binding site. Tyr126 contributes to the pheophytin a binding site. Residues Asp170 and Glu189 each coordinate [CaMn4O5] cluster. A helical membrane pass occupies residues 197 to 218 (FHMLGVAGVFGGSLFSAMHGSL). Residue His198 participates in chlorophyll a binding. Residues His215 and 264-265 (SF) contribute to the a quinone site. His215 is a binding site for Fe cation. Residue His272 participates in Fe cation binding. Residues 274–288 (FLAAWPVVGIWFTAL) form a helical membrane-spanning segment. Positions 332, 333, 342, and 344 each coordinate [CaMn4O5] cluster. Residues 345-353 (AVEAPSTNG) constitute a propeptide that is removed on maturation.

It belongs to the reaction center PufL/M/PsbA/D family. In terms of assembly, PSII is composed of 1 copy each of membrane proteins PsbA, PsbB, PsbC, PsbD, PsbE, PsbF, PsbH, PsbI, PsbJ, PsbK, PsbL, PsbM, PsbT, PsbX, PsbY, PsbZ, Psb30/Ycf12, at least 3 peripheral proteins of the oxygen-evolving complex and a large number of cofactors. It forms dimeric complexes. Requires The D1/D2 heterodimer binds P680, chlorophylls that are the primary electron donor of PSII, and subsequent electron acceptors. It shares a non-heme iron and each subunit binds pheophytin, quinone, additional chlorophylls, carotenoids and lipids. D1 provides most of the ligands for the Mn4-Ca-O5 cluster of the oxygen-evolving complex (OEC). There is also a Cl(-1) ion associated with D1 and D2, which is required for oxygen evolution. The PSII complex binds additional chlorophylls, carotenoids and specific lipids. as cofactor. Tyr-161 forms a radical intermediate that is referred to as redox-active TyrZ, YZ or Y-Z. In terms of processing, C-terminally processed by CTPA; processing is essential to allow assembly of the oxygen-evolving complex and thus photosynthetic growth.

Its subcellular location is the plastid. It localises to the chloroplast thylakoid membrane. The catalysed reaction is 2 a plastoquinone + 4 hnu + 2 H2O = 2 a plastoquinol + O2. Its function is as follows. Photosystem II (PSII) is a light-driven water:plastoquinone oxidoreductase that uses light energy to abstract electrons from H(2)O, generating O(2) and a proton gradient subsequently used for ATP formation. It consists of a core antenna complex that captures photons, and an electron transfer chain that converts photonic excitation into a charge separation. The D1/D2 (PsbA/PsbD) reaction center heterodimer binds P680, the primary electron donor of PSII as well as several subsequent electron acceptors. This chain is Photosystem II protein D1, found in Panax ginseng (Korean ginseng).